Reading from the N-terminus, the 464-residue chain is Soluble pyridine nucleotide transhydrogenase (464 aa).

35 to 44 provides a ligand contact to FAD; that stretch reads EASSQVGGSC.

This sequence belongs to the class-I pyridine nucleotide-disulfide oxidoreductase family. FAD serves as cofactor.

The protein resides in the cytoplasm. The enzyme catalyses NAD(+) + NADPH = NADH + NADP(+). Conversion of NADPH, generated by peripheral catabolic pathways, to NADH, which can enter the respiratory chain for energy generation. The protein is Soluble pyridine nucleotide transhydrogenase of Marinomonas sp. (strain MWYL1).